The primary structure comprises 186 residues: Coiled-coil domain-containing protein ORF13 (186 aa).

2 coiled-coil regions span residues G2 to K30 and L63 to K85.

The sequence is that of Coiled-coil domain-containing protein ORF13 from Helicobacter pylori (strain 35A).